A 270-amino-acid polypeptide reads, in one-letter code: MTVDDPKGMKDQLDQKPNGKTAKGFVSSWRWYPAAVTLGVLCLGLLVTVILLILQLSQVSDLIKKQQANITHQEDILEGQILAQRRSEKSAQESQKELKEMIETLAHKLDEKSKKLMELHRQNLNLQEVLKEAANYSGPCPQDWLWHEENCYQFSSGSFNWEKSQENCLSLDAHLLKINSTDELEFIQQMIAHSSFPFWMGLSMRKPNYSWLWEDGTPLTPHLFRIQGAVSRMYPSGTCAYIQRGTVFAENCILTAFSICQKKANLLRAQ.

Over residues 1-14 the composition is skewed to basic and acidic residues; the sequence is MTVDDPKGMKDQLD. A disordered region spans residues 1-22; sequence MTVDDPKGMKDQLDQKPNGKTA. The Cytoplasmic portion of the chain corresponds to 1–33; the sequence is MTVDDPKGMKDQLDQKPNGKTAKGFVSSWRWYP. A helical; Signal-anchor for type II membrane protein transmembrane segment spans residues 34–56; sequence AAVTLGVLCLGLLVTVILLILQL. A lipid anchor (S-palmitoyl cysteine) is attached at Cys42. Residues 57–146 form a neck region; it reads SQVSDLIKKQ…SGPCPQDWLW (90 aa). The Extracellular portion of the chain corresponds to 57-270; the sequence is SQVSDLIKKQ…QKKANLLRAQ (214 aa). Asn69 and Asn135 each carry an N-linked (GlcNAc...) asparagine glycan. The stretch at 85 to 135 forms a coiled coil; it reads RRSEKSAQESQKELKEMIETLAHKLDEKSKKLMELHRQNLNLQEVLKEAAN. 3 disulfides stabilise this stretch: Cys140-Cys151, Cys168-Cys260, and Cys239-Cys252. One can recognise a C-type lectin domain in the interval 147 to 261; that stretch reads HEENCYQFSS…CILTAFSICQ (115 aa).

In terms of assembly, homodimer; disulfide-linked. May form a hexamer composed of 3 homodimers. Interacts with HSP70. Post-translationally, N-glycosylated. Highly expressed in endothelial cells, aortic intima and lung. Expressed at low level in other tissues.

It is found in the cell membrane. The protein resides in the membrane raft. Its subcellular location is the secreted. Receptor that mediates the recognition, internalization and degradation of oxidatively modified low density lipoprotein (oxLDL) by vascular endothelial cells. OxLDL is a marker of atherosclerosis that induces vascular endothelial cell activation and dysfunction, resulting in pro-inflammatory responses, pro-oxidative conditions and apoptosis. Its association with oxLDL induces the activation of NF-kappa-B through an increased production of intracellular reactive oxygen and a variety of pro-atherogenic cellular responses including a reduction of nitric oxide (NO) release, monocyte adhesion and apoptosis. In addition to binding oxLDL, it acts as a receptor for the HSP70 protein involved in antigen cross-presentation to naive T-cells in dendritic cells, thereby participating in cell-mediated antigen cross-presentation. Also involved in inflammatory process, by acting as a leukocyte-adhesion molecule at the vascular interface in endotoxin-induced inflammation. Also acts as a receptor for advanced glycation end (AGE) products, activated platelets, monocytes, apoptotic cells and both Gram-negative and Gram-positive bacteria. This is Oxidized low-density lipoprotein receptor 1 (OLR1) from Bos taurus (Bovine).